The chain runs to 175 residues: Ribulose bisphosphate carboxylase small subunit, chloroplastic (175 aa).

A chloroplast-targeting transit peptide spans 1–34; the sequence is MSFATTNKTIVPCATTKQIVRPRFLSNGTISKSR.

This sequence belongs to the RuBisCO small chain family. In terms of assembly, heterohexadecamer of 8 large and 8 small subunits.

The protein localises to the plastid. The protein resides in the chloroplast. Functionally, ruBisCO catalyzes two reactions: the carboxylation of D-ribulose 1,5-bisphosphate, the primary event in carbon dioxide fixation, as well as the oxidative fragmentation of the pentose substrate. Both reactions occur simultaneously and in competition at the same active site. Although the small subunit is not catalytic it is essential for maximal activity. In Batophora oerstedii (Green alga), this protein is Ribulose bisphosphate carboxylase small subunit, chloroplastic.